A 203-amino-acid chain; its full sequence is dITP/XTP pyrophosphatase (203 aa).

Position 7-12 (7-12 (SGNLHK)) interacts with substrate. Mg(2+) contacts are provided by glutamate 47 and aspartate 77. Aspartate 77 (proton acceptor) is an active-site residue. Residues serine 78, 160–163 (FGYD), lysine 183, and 188–189 (HR) each bind substrate.

This sequence belongs to the HAM1 NTPase family. As to quaternary structure, homodimer. Mg(2+) serves as cofactor.

The catalysed reaction is XTP + H2O = XMP + diphosphate + H(+). The enzyme catalyses dITP + H2O = dIMP + diphosphate + H(+). It catalyses the reaction ITP + H2O = IMP + diphosphate + H(+). Pyrophosphatase that catalyzes the hydrolysis of nucleoside triphosphates to their monophosphate derivatives, with a high preference for the non-canonical purine nucleotides XTP (xanthosine triphosphate), dITP (deoxyinosine triphosphate) and ITP. Seems to function as a house-cleaning enzyme that removes non-canonical purine nucleotides from the nucleotide pool, thus preventing their incorporation into DNA/RNA and avoiding chromosomal lesions. This chain is dITP/XTP pyrophosphatase, found in Opitutus terrae (strain DSM 11246 / JCM 15787 / PB90-1).